A 262-amino-acid chain; its full sequence is Nodulation protein J (262 aa).

The ABC transmembrane type-2 domain occupies 33 to 259 (ASLLGNLADP…FASIALFRRR (227 aa)). 7 consecutive transmembrane segments (helical) span residues 37 to 57 (GNLADPITNLFGLGFGLGLIV), 64 to 84 (SYIAFLAAGMVAISAMTSATF), 102 to 122 (GILFTQLTLGDIVLGELVWAA), 125 to 145 (SVLAGTAIGIVAATLGYASWT), 149 to 169 (CAIPTIALTGLVFASLAMVVI), 177 to 197 (YFVFYQSLVLTPMVFLCGAVF), and 236 to 256 (LHVGALCVYAVLPFFASIALF).

This sequence belongs to the ABC-2 integral membrane protein family. Lipooligosaccharide exporter (TC 3.A.1.102) subfamily. As to quaternary structure, the complex is composed of two ATP-binding proteins (NodI) and two transmembrane proteins (NodJ).

Its subcellular location is the cell inner membrane. Part of the ABC transporter complex NodIJ involved in the export of the nodulation factors (Nod factors), the bacterial signal molecules that induce symbiosis and subsequent nodulation induction. Nod factors are LCO (lipo-chitin oligosaccharide), a modified beta-1,4-linked N-acetylglucosamine oligosaccharide. This subunit encodes the transporter. In Bradyrhizobium diazoefficiens (strain JCM 10833 / BCRC 13528 / IAM 13628 / NBRC 14792 / USDA 110), this protein is Nodulation protein J (nodJ).